The following is a 302-amino-acid chain: Heme A synthase (302 aa).

Over 1 to 8 the chain is Cytoplasmic; that stretch reads MFRKQNLK. The helical transmembrane segment at 9–29 threads the bilayer; that stretch reads WLGVLATIIMTFVQLGGALVT. At 30-67 the chain is on the extracellular side; it reads KTGSEDGCGSSWPLCNGALLPENLPIQTIIELSHRAVS. A disulfide bond links C37 and C44. E60 is a catalytic residue. H63 serves as a coordination point for heme o. Residues 68 to 88 traverse the membrane as a helical segment; that stretch reads AISLIVVLWLVITAWKNIGYI. Residues 89–93 lie on the Cytoplasmic side of the membrane; that stretch reads KEIKP. A helical transmembrane segment spans residues 94–114; sequence LSIISVGFLLVQALVGAAAVI. Topologically, residues 115–125 are extracellular; the sequence is WQQNPYVLALH. H125 lines the heme o pocket. A helical transmembrane segment spans residues 126-146; sequence FGISLISFSSVFLMTLIIFSI. Topologically, residues 147 to 161 are cytoplasmic; that stretch reads DKKYEADILFIHKPL. A helical transmembrane segment spans residues 162-182; sequence RILTWLMAIIVYLTIYTGALV. Residues 183–215 are Extracellular-facing; it reads RHTKSSLAYGAWPIPFDDIVPHNAHDWVQFSHR. H214 contacts heme b. A helical transmembrane segment spans residues 216 to 236; it reads GMALITFIWIMITFIHAIKNY. Topologically, residues 237-244 are cytoplasmic; that stretch reads SDNRTVRY. Residues 245–265 form a helical membrane-spanning segment; the sequence is GYTASFILVILQVITGALSVI. Residues 266–270 are Extracellular-facing; sequence TNVNL. A helical membrane pass occupies residues 271-291; that stretch reads IIALFHALFITYLFGMIAYFI. H276 contributes to the heme b binding site. Topologically, residues 292–302 are cytoplasmic; that stretch reads LLMLRTTRSQK.

The protein belongs to the COX15/CtaA family. Type 1 subfamily. Interacts with CtaB. Requires heme b as cofactor.

The protein localises to the cell membrane. It carries out the reaction Fe(II)-heme o + 2 A + H2O = Fe(II)-heme a + 2 AH2. It functions in the pathway porphyrin-containing compound metabolism; heme A biosynthesis; heme A from heme O: step 1/1. Catalyzes the conversion of heme O to heme A by two successive hydroxylations of the methyl group at C8. The first hydroxylation forms heme I, the second hydroxylation results in an unstable dihydroxymethyl group, which spontaneously dehydrates, resulting in the formyl group of heme A. The chain is Heme A synthase from Staphylococcus epidermidis (strain ATCC 35984 / DSM 28319 / BCRC 17069 / CCUG 31568 / BM 3577 / RP62A).